A 107-amino-acid polypeptide reads, in one-letter code: Small ribosomal subunit protein uS17 (107 aa).

It belongs to the universal ribosomal protein uS17 family. As to quaternary structure, part of the 30S ribosomal subunit.

Its function is as follows. One of the primary rRNA binding proteins, it binds specifically to the 5'-end of 16S ribosomal RNA. In Nitrosopumilus maritimus (strain SCM1), this protein is Small ribosomal subunit protein uS17.